A 137-amino-acid polypeptide reads, in one-letter code: Histone H2B (137 aa).

Positions 1–10 (MAPKAADKKP) are enriched in basic and acidic residues. The interval 1–45 (MAPKAADKKPASKAPATASKAPEKKDAGKKTAPSGDKKKRTKARK) is disordered. 2 positions are modified to N6-acetyllysine; alternate: Lys-8 and Lys-9. Glycyl lysine isopeptide (Lys-Gly) (interchain with G-Cter in SUMO); alternate cross-links involve residues Lys-8 and Lys-9. At Ser-12 the chain carries Phosphoserine. Lys-13 is modified (N6-acetyllysine). Lys-24 carries the N6-acetyllysine; alternate modification. Lys-24 is covalently cross-linked (Glycyl lysine isopeptide (Lys-Gly) (interchain with G-Cter in SUMO); alternate). Residue Lys-25 forms a Glycyl lysine isopeptide (Lys-Gly) (interchain with G-Cter in SUMO) linkage. Lys-131 is covalently cross-linked (Glycyl lysine isopeptide (Lys-Gly) (interchain with G-Cter in ubiquitin)).

Belongs to the histone H2B family. As to quaternary structure, the nucleosome is a histone octamer containing two molecules each of H2A, H2B, H3 and H4 assembled in one H3-H4 heterotetramer and two H2A-H2B heterodimers. The octamer wraps approximately 147 bp of DNA. Post-translationally, monoubiquitinated by the UBC2-BRE1 complex to form H2BK123ub1. H2BK123ub1 gives a specific tag for epigenetic transcriptional activation and is also prerequisite for H3K4me and H3K79me formation. H2BK123ub1 also modulates the formation of double-strand breaks during meiosis and is a prerequisite for DNA-damage checkpoint activation. Phosphorylated to form H2BS10ph during progression through meiotic prophase. May be correlated with chromosome condensation. In terms of processing, acetylated by GCN5 to form H2BK11ac and H2BK16ac. H2BK16ac can also be formed by ESA1. Acetylation of N-terminal lysines and particularly formation of H2BK11acK16ac has a positive effect on transcription. Post-translationally, sumoylation to form H2BK6su or H2BK7su, and probably also H2BK16su or H2BK17su, occurs preferentially near the telomeres and represses gene transcription.

Its subcellular location is the nucleus. It is found in the chromosome. Its function is as follows. Core component of nucleosome. Nucleosomes wrap and compact DNA into chromatin, limiting DNA accessibility to the cellular machineries which require DNA as a template. Histones thereby play a central role in transcription regulation, DNA repair, DNA replication and chromosomal stability. DNA accessibility is regulated via a complex set of post-translational modifications of histones, also called histone code, and nucleosome remodeling. This chain is Histone H2B (HTB1), found in Chaetomium globosum (strain ATCC 6205 / CBS 148.51 / DSM 1962 / NBRC 6347 / NRRL 1970) (Soil fungus).